Consider the following 195-residue polypeptide: MKNVKFIKKSESVIGLWLPILVILILFAFLVAESVIMKDIILSNSVVALATAIMASAALVTILVSNRQVQLMARQQRLKAIEDRLEKFYIPLIKAFSSYVYTAQTEDEIETIITCRRYLAGNNLLRVLPMHFKFKADKIAGSANWTFYAKEDFEQWKEALDVLWEEFLEVLKEYYTLSGTEISLPEKPDWLIGYK.

Helical transmembrane passes span 13 to 32 (VIGL…FLVA) and 42 to 64 (LSNS…TILV).

It localises to the cell membrane. This is an uncharacterized protein from Archaeoglobus fulgidus (strain ATCC 49558 / DSM 4304 / JCM 9628 / NBRC 100126 / VC-16).